We begin with the raw amino-acid sequence, 898 residues long: Interleukin enhancer-binding factor 3-B (898 aa).

The DZF domain maps to 5 to 379; sequence RIFLNDDRHV…ALKRPIEEDG (375 aa). 5 disordered regions span residues 52 to 87, 374 to 403, 468 to 529, 627 to 651, and 711 to 799; these read QEKD…NPTR, PIEE…PPQA, LPTG…VMEL, PPPQ…RGGF, and GEGY…QGAA. The span at 61–71 shows a compositional bias: acidic residues; that stretch reads ENPEPEETETT. Composition is skewed to basic and acidic residues over residues 72–81 and 374–384; these read EEGKDSEAKT and PIEEDGEDKSP. The Bipartite nuclear localization signal motif lies at 372–390; it reads KRPIEEDGEDKSPSKKKKK. The DRBM 1 domain maps to 399-468; sequence EPPQAMNALM…AVKVLQDMGL (70 aa). Over residues 474 to 483 the composition is skewed to acidic residues; that stretch reads EKEESVDESE. Over residues 489–513 the composition is skewed to polar residues; sequence QTPSQTADSEQADSSAGDQSESGKQ. Residues 521 to 587 form the DRBM 2 domain; the sequence is HGKNPVMELN…ALSALEKLFP (67 aa). Positions 637-651 are enriched in gly residues; it reads RGGMNRGRGRGRGGF. Residues 717 to 747 show a composition bias toward pro residues; that stretch reads PTPPKPFVKKPPPPQQQQQPPPQHASNPPKP. Over residues 749–782 the composition is skewed to low complexity; the sequence is YNQGYQGHQGGQQQQQPQQQQQQTYNQNQYSNYG.

In terms of assembly, a component of a ybx2/frgy2-containing mRNA-ribonucleoprotein (mRNP) complex. Also a component of the CCAAT box transcription factor (CBTF) complex. In terms of processing, phosphorylated. Phosphorylation affects nuclear translocation. Methylated by protein arginine N-methyltransferase 1 (prmt1b) in the RGG-rich domain. Methylation decreases DNA-binding and thereby decreases transcription of the gata2 gene, but does not regulate dsRNA binding or subcellular localization.

The protein resides in the nucleus. Its subcellular location is the cytoplasm. Functionally, RNA-binding protein that plays an essential role in the biogenesis of circular RNAs (circRNAs) which are produced by back-splicing circularization of pre-mRNAs. Within the nucleus, promotes circRNAs processing by stabilizing the regulatory elements residing in the flanking introns of the circularized exons. Plays thereby a role in the back-splicing of a subset of circRNAs. As a consequence, participates in a wide range of transcriptional and post-transcriptional processes. Binds to poly-U elements and AU-rich elements (AREs) in the 3'-UTR of target mRNAs. Upon viral infection, ILF3 accumulates in the cytoplasm and participates in the innate antiviral response. Mechanistically, ILF3 becomes phosphorylated and activated by the double-stranded RNA-activated protein kinase/PKR which releases ILF3 from cellular mature circRNAs. In turn, unbound ILF3 molecules are able to interact with and thus inhibit viral mRNAs. Has a cytoplasmic role early in development as part of a ribonucleoprotein (mRNP) complex which may regulate mRNA transport and/or translation. Following nuclear localization at the mid-blastula transition, acts as a transcription factor and binds the 5'-CCAAT-3' promoter sequence to regulate transcription of the gata2 gene as a subunit of the CCAAT box transcription factor (CBTF). Its role as an mRNP component negatively regulates its activity as a transcription factor by precluding its nuclear localization. The protein is Interleukin enhancer-binding factor 3-B (ilf3-b) of Xenopus laevis (African clawed frog).